A 192-amino-acid chain; its full sequence is Mitochondrial import inner membrane translocase subunit Tim22 (192 aa).

2 cysteine pairs are disulfide-bonded: Cys-67-Cys-139 and Cys-158-Cys-177. A run of 3 helical transmembrane segments spans residues 72–92 (VLAC…TAGI), 123–141 (YAKN…ECLV), and 168–188 (AGVK…AAID).

It belongs to the Tim17/Tim22/Tim23 family. As to quaternary structure, component of the TIM22 complex, whose core is composed of TIMM22, associated with peripheral protein FXC1/TIMM10B and the 70 kDa heterohexamer. In most cases, the 70 kDa complex is composed of TIMM9 and TIMM10 (TIMM10A or TIMM10B). A small fraction of the 70 kDa complex is composed of TIMM8 (TIMM8A/DDP1 or TIMM8B/DDP2) and TIMM13. The TIM22 complex also contains AGK and TIMM29. Interacts directly with TIMM9, TIMM10A and FXC1/TIMM10B. Interacts (when oxidized) with TIMM29; interaction is direct. In terms of processing, disulfide bonds promote efficient assembly of the TIM22 complex.

The protein localises to the mitochondrion inner membrane. Functionally, essential core component of the TIM22 complex, a complex that mediates the import and insertion of multi-pass transmembrane proteins into the mitochondrial inner membrane. In the TIM22 complex, it constitutes the voltage-activated and signal-gated channel. Forms a twin-pore translocase that uses the membrane potential as external driving force in 2 voltage-dependent steps. This chain is Mitochondrial import inner membrane translocase subunit Tim22 (Timm22), found in Rattus norvegicus (Rat).